Reading from the N-terminus, the 263-residue chain is Peptidoglycan-N-acetylmuramic acid deacetylase PdaA (263 aa).

The N-terminal stretch at 1–23 (MKWMCSICCAAVLLAGGAAQAEA) is a signal peptide. One can recognise a NodB homology domain in the interval 66-247 (KTIYLTFDNG…DLKKQGYTFK (182 aa)). The active-site Proton acceptor is the Asp73. Residues His124 and His128 each contribute to the a divalent metal cation site. Residue His222 is the Proton donor of the active site.

It belongs to the polysaccharide deacetylase family.

Functionally, catalyzes the deacetylation of N-acetylmuramic acid (MurNAc) residues in glycan strands of peptidoglycan, leading to the formation of muramic delta-lactam residues in spore cortex, after transpeptidation of deacetylated muramic acid residues. PdaA probably carries out both deacetylation and lactam ring formation and requires the product of CwlD activity on peptidoglycan as a substrate. Is required for germination. Cannot use chitin oligomer (hexa-N-acetylchitohexaose) as a substrate. This chain is Peptidoglycan-N-acetylmuramic acid deacetylase PdaA (pdaA), found in Bacillus subtilis (strain 168).